A 566-amino-acid polypeptide reads, in one-letter code: Endoglucanase B (566 aa).

The signal sequence occupies residues 1–30; it reads MKKRRSSKVILSLAIVVALLAAVEPNAALA. The active-site Proton donor is Glu177. Glu299 functions as the Nucleophile in the catalytic mechanism.

The protein belongs to the glycosyl hydrolase 5 (cellulase A) family.

It carries out the reaction Endohydrolysis of (1-&gt;4)-beta-D-glucosidic linkages in cellulose, lichenin and cereal beta-D-glucans.. This is Endoglucanase B (celB) from Paenibacillus lautus (Bacillus lautus).